A 395-amino-acid chain; its full sequence is Guanine nucleotide-binding protein subunit beta-5 (395 aa).

WD repeat units lie at residues 103–142 (GHGN…KEHA), 145–184 (MPCT…NENM), 193–234 (MHTN…QSFH), 236–278 (HGAD…QAFE), 279–318 (THES…EVAI), 320–362 (SKES…RVSI), and 365–394 (GHEN…LRVW).

The protein belongs to the WD repeat G protein beta family. As to quaternary structure, component of a complex composed of RGS9 (isoform RGS9-1), GNB5 and RGS9BP; within this complex, the presence of GNB5 stabilizes both itself and RGS9 and increases RGS9 GTPase-activating protein (GAP) activity. Interacts with RGS7, forming the RGS7-GNB5 complex; within this complex, the presence of GNB5 increases RGS7 GTPase-activating protein (GAP) activity. Interacts with GPR158; promotes the GTPase activator activity of the RGS7-GNB5 complex in absence of glycine, in contrast GTPase activator activity of the RGS7-GNB5 complex is inhibited in presence of glycine. Interacts with RGS6. In terms of tissue distribution, isoform 1 is only detected in retina. Isoform 2 is detected in brain (at protein level). Isoform 2 is detected in brain.

It is found in the membrane. Enhances GTPase-activating protein (GAP) activity of regulator of G protein signaling (RGS) proteins, such as RGS7 and RGS9, hence involved in the termination of the signaling initiated by the G protein coupled receptors (GPCRs) by accelerating the GTP hydrolysis on the G-alpha subunits, thereby promoting their inactivation. Increases RGS7 GTPase-activating protein (GAP) activity, thereby regulating mood and cognition. Increases RGS9 GTPase-activating protein (GAP) activity, hence contributes to the deactivation of G protein signaling initiated by D(2) dopamine receptors. May play an important role in neuronal signaling, including in the parasympathetic, but not sympathetic, control of heart rate. The chain is Guanine nucleotide-binding protein subunit beta-5 (Gnb5) from Mus musculus (Mouse).